The sequence spans 543 residues: EH domain-containing protein 2 (543 aa).

Ser3 is modified (phosphoserine). In terms of domain architecture, Dynamin-type G spans 55–286 (FDGKPMVLVA…DLFRDIQGLP (232 aa)). The segment at 65–72 (GQYSTGKT) is G1 motif. 65–72 (GQYSTGKT) serves as a coordination point for ATP. Residues 91-92 (EP) are G2 motif. A KPF loop; caveolar targeting motif is present at residues 120–122 (KPF). A G3 motif region spans residues 153–156 (DTPG). Positions 219–222 (NKAD) are G4 motif. Lys220 lines the ATP pocket. Residue Val243 is a region of interest, G5 motif. Trp258 is an ATP binding site. The mediates membrane-binding stretch occupies residues 320 to 340 (SVFGKENKKKQLILKLPVIFA). Residues Ser438, Ser468, Ser470, Ser484, and Ser493 each carry the phosphoserine modification. Residues 449 to 537 (DKSKYDEIFY…RRLVPPSKRR (89 aa)) form the EH domain. The EF-hand domain occupies 481 to 516 (LPNSVLGRIWKLSDVDRDGMLDDEEFALASHLIEAK). Residues Asp494, Asp496, Asp498, Met500, and Glu505 each coordinate Ca(2+). The interval 523-543 (PANLPRRLVPPSKRRHKGSAE) is disordered. The segment covering 534–543 (SKRRHKGSAE) has biased composition (basic residues).

Belongs to the TRAFAC class dynamin-like GTPase superfamily. Dynamin/Fzo/YdjA family. EHD subfamily. Homodimer and homooligomer. Interacts with EHD1. May also interact with EHD3 and EHD4. Interacts with MYOF. Interacts with EHBP1. Interacts with FER1L5 (via second C2 domain). Interacts with CAV1 in a cholesterol-dependent manner. Interacts (via EH domain) with PACSIN2 (via NPF motifs); this interaction probably stabilizes the caveolae. As to expression, highly expressed in heart and moderately expressed in placenta, lung, and skeletal muscle.

Its subcellular location is the cell membrane. The protein resides in the membrane. The protein localises to the caveola. It is found in the endosome membrane. It localises to the cytoplasm. Its subcellular location is the cytosol. The very low intrinsic ATPase activity is increased upon interaction with liposomes. Functionally, ATP- and membrane-binding protein that controls membrane reorganization/tubulation upon ATP hydrolysis. Plays a role in membrane trafficking between the plasma membrane and endosomes. Important for the internalization of GLUT4. Required for fusion of myoblasts to skeletal muscle myotubes. Required for normal translocation of FER1L5 to the plasma membrane. Regulates the equilibrium between cell surface-associated and cell surface-dissociated caveolae by constraining caveolae at the cell membrane. The polypeptide is EH domain-containing protein 2 (Homo sapiens (Human)).